A 1016-amino-acid chain; its full sequence is Formate dehydrogenase-O major subunit (1016 aa).

Positions Met-1–Ala-33 form a signal peptide, tat-type signal. The 4Fe-4S Mo/W bis-MGD-type domain occupies Thr-43–Ser-106. Residues Cys-50, Cys-53, Cys-57, and Cys-92 each coordinate [4Fe-4S] cluster. Residue Sec-196 is a non-standard amino acid, selenocysteine.

This sequence belongs to the prokaryotic molybdopterin-containing oxidoreductase family. In terms of assembly, formate dehydrogenase is a membrane-bound complex, formed by subunits alpha, beta and gamma. It depends on Mo-bis(molybdopterin guanine dinucleotide) as a cofactor. The cofactor is [4Fe-4S] cluster. In terms of processing, exported by the Tat system. The position of the signal peptide cleavage has not been experimentally proven.

The protein resides in the periplasm. The catalysed reaction is formate + NAD(+) = CO2 + NADH. Functionally, allows to use formate as major electron donor during aerobic respiration. Subunit alpha possibly forms the active site. This Escherichia coli (strain K12) protein is Formate dehydrogenase-O major subunit (fdoG).